The sequence spans 406 residues: Protrudin (406 aa).

Over 1 to 71 (MQAAERDGVA…AAEGVRALLR (71 aa)) the chain is Cytoplasmic. Residues 1 to 97 (MQAAERDGVA…LLLTLDQAAW (97 aa)) are sufficient for homooligomerization. The segment at 1–210 (MQAAERDGVA…LYLLPLCWVM (210 aa)) is sufficient for localization to endoplasmic reticulum tubular network. Residues 72 to 92 (WQRPLCSLLVCLGLNFLLLTL) form a helical membrane-spanning segment. Residue aspartate 93 is a topological domain, lumenal. A helical transmembrane segment spans residues 94–114 (QAAWYSVLALLVLLPALLGYL). Residues 115–192 (QETYRVRPSE…NPTVSSQFYG (78 aa)) are Cytoplasmic-facing. The helical intramembrane region spans 193 to 213 (ALLGSVCILYLLPLCWVMAIL). Over 214-406 (NSTLFLGNSQ…CAQCNQMLIK (193 aa)) the chain is Cytoplasmic. The segment at 239–295 (LGTKPLESAPEPAKPLPTDAPPDRTPTPTSTEDLTPGSVEEAEEAEPDEEFKDAIEE) is disordered. The span at 250 to 263 (PAKPLPTDAPPDRT) shows a compositional bias: pro residues. The segment covering 278–295 (EEAEEAEPDEEFKDAIEE) has biased composition (acidic residues). The FYVE-type zinc-finger motif lies at 339-405 (SNNFGTCTGC…VCAQCNQMLI (67 aa)). Residues cysteine 345, cysteine 348, cysteine 361, cysteine 364, cysteine 369, cysteine 372, cysteine 397, and cysteine 400 each coordinate Zn(2+).

Can form homooligomers (monomers, dimers and tetramers).

It localises to the recycling endosome membrane. It is found in the endoplasmic reticulum membrane. The protein localises to the cell projection. The protein resides in the growth cone membrane. In terms of biological role, key regulator of RAB11-dependent vesicular trafficking during neurite extension through polarized membrane transport. Promotes axonal elongation and contributes to the establishment of neuronal cell polarity. Involved in nerve growth factor-induced neurite formation in VAPA-dependent manner. Contributes to both the formation and stabilization of the tubular ER network. Involved in ER morphogenesis by regulating the sheet-to-tubule balance and possibly the density of tubule interconnections. The chain is Protrudin (ZFYVE27) from Gallus gallus (Chicken).